Here is a 103-residue protein sequence, read N- to C-terminus: MHVKKGDKVKVLSGKDRGKEGTVLEAFPKNERVLVEGVNMVQKHAKPSQENPQGGILNIEAPIHVSNVLPVDPKSGEPTRVGYEVKDGKKIRIAKKSGEALDK.

It belongs to the universal ribosomal protein uL24 family. Part of the 50S ribosomal subunit.

Functionally, one of two assembly initiator proteins, it binds directly to the 5'-end of the 23S rRNA, where it nucleates assembly of the 50S subunit. Its function is as follows. One of the proteins that surrounds the polypeptide exit tunnel on the outside of the subunit. The chain is Large ribosomal subunit protein uL24 from Oceanobacillus iheyensis (strain DSM 14371 / CIP 107618 / JCM 11309 / KCTC 3954 / HTE831).